Reading from the N-terminus, the 490-residue chain is Monocarboxylate transporter 3 (490 aa).

The Cytoplasmic segment spans residues 1 to 14 (MGAGGPRRGAGPPD). Residues 15–35 (GGWGWVVLGACFVITGFAYGF) form a helical membrane-spanning segment. Residues 36 to 58 (PKAVSVFFRELKRDFGAGYSDTA) lie on the Extracellular side of the membrane. A helical membrane pass occupies residues 59–79 (WVSSIMLAMLYGTGPLSSILV). At 80–85 (TRFGCR) the chain is on the cytoplasmic side. The helical transmembrane segment at 86-106 (PVMLAGGLLASAGMILASFAS) threads the bilayer. The Extracellular portion of the chain corresponds to 107–115 (RLLELYLTA). The helical transmembrane segment at 116–136 (GVLTGLGLALNFQPSLIMLGL) threads the bilayer. Topologically, residues 137–147 (YFERRRPLANG) are cytoplasmic. A helical transmembrane segment spans residues 148 to 168 (LAAAGSPVFLSTLSPLGQLLG). Topologically, residues 169–172 (ERFG) are extracellular. A helical membrane pass occupies residues 173–193 (WRGGFLLFGGLLLHCCACGAV). Over 194–230 (MRPPPGPQPRPDPAPPGGRARHRQLLDLAVCTDRTFM) the chain is Cytoplasmic. A helical transmembrane segment spans residues 231–251 (VYMVTKFLMALGLFVPAILLV). The Extracellular segment spans residues 252 to 257 (NYAKDA). Residues 258–278 (GVPDAEAAFLLSIVGFVDIVA) traverse the membrane as a helical segment. Topologically, residues 279 to 293 (RPACGALAGLGRLRP) are cytoplasmic. A helical transmembrane segment spans residues 294 to 314 (HVPYLFSLALLANGLTDLISA). Residues 315–318 (RARS) lie on the Extracellular side of the membrane. A helical transmembrane segment spans residues 319–339 (YGTLVAFCIAFGLSYGMVGAL). Residues 340–352 (QFEVLMATVGAPR) are Cytoplasmic-facing. Residues 353–373 (FPSALGLVLLVEAVAVLIGPP) form a helical membrane-spanning segment. Topologically, residues 374 to 386 (SAGRLVDALKNYE) are extracellular. The helical transmembrane segment at 387-407 (IIFYLAGSEVVLAGVFMAVTT) threads the bilayer. Over 408–490 (YCCQRCSKDI…GGHEAHGQNA (83 aa)) the chain is Cytoplasmic. The segment at 419–490 (PGPSAEGGTS…GGHEAHGQNA (72 aa)) is disordered. Basolateral sorting signal stretches follow at residues 426–460 (GTSD…VLSP) and 461–480 (RAGS…HESV). A compositionally biased stretch (basic and acidic residues) spans 475–490 (LSHESVGGHEAHGQNA).

The protein belongs to the major facilitator superfamily. Monocarboxylate porter (TC 2.A.1.13) family. As to expression, retinal pigment epithelium.

Its subcellular location is the basolateral cell membrane. It catalyses the reaction (S)-lactate(in) + H(+)(in) = (S)-lactate(out) + H(+)(out). Functionally, probable retinal pigment epithelium (RPE)-specific proton-coupled L-lactate transporter. May facilitate transport of lactate and H(+) out of the retina and could therefore play a role in pH and ion homeostasis of the outer retina. The sequence is that of Monocarboxylate transporter 3 (Slc16a8) from Rattus norvegicus (Rat).